The primary structure comprises 134 residues: FK506-binding protein 2 (134 aa).

The N-terminal stretch at 1-19 (MRILLLSALFLSLTTLVLS) is a signal peptide. The PPIase FKBP-type domain occupies 39-127 (GDTVHMHYRG…IFETELVQIE (89 aa)). A Prevents secretion from ER motif is present at residues 131-134 (NDEL).

The protein belongs to the FKBP-type PPIase family. FKBP2 subfamily.

Its subcellular location is the endoplasmic reticulum. It carries out the reaction [protein]-peptidylproline (omega=180) = [protein]-peptidylproline (omega=0). Its activity is regulated as follows. Inhibited by both FK506 and rapamycin. Functionally, PPIases accelerate the folding of proteins. It catalyzes the cis-trans isomerization of proline imidic peptide bonds in oligopeptides. The sequence is that of FK506-binding protein 2 (fpr2) from Aspergillus fumigatus (strain ATCC MYA-4609 / CBS 101355 / FGSC A1100 / Af293) (Neosartorya fumigata).